A 234-amino-acid chain; its full sequence is MVNFYDDVDESKSHGEFPLIPVVLQNSSELSVRTIPTGNEIIESVHLTKWLRKYRNALASQLDRYEKGWQSKIANFRLQVQHVINYSRKNIFNVDSENKHTVVPGSLIALGAFFSGSIAVNRSNWGAKRLIFGHKSSILEKLCTSLPSRILLPWVLAAATFKYWAPQTSQNLVNATENDLLPADFVKSYHNTWKRIYEEGYVAKKCDLKRQIDQTLQKNIRYAREQLYEKLEQA.

At 1–100 (MVNFYDDVDE…IFNVDSENKH (100 aa)) the chain is on the mitochondrial intermembrane side. The helical transmembrane segment at 101-120 (TVVPGSLIALGAFFSGSIAV) threads the bilayer. Over 121 to 141 (NRSNWGAKRLIFGHKSSILEK) the chain is Mitochondrial matrix. A helical transmembrane segment spans residues 142–161 (LCTSLPSRILLPWVLAAATF). The Mitochondrial intermembrane segment spans residues 162-234 (KYWAPQTSQN…EQLYEKLEQA (73 aa)).

Belongs to the apolipoprotein O/MICOS complex subunit Mic27 family. Component of the mitochondrial contact site and cristae organizing system (MICOS) complex.

The protein resides in the mitochondrion inner membrane. Functionally, component of the MICOS complex, a large protein complex of the mitochondrial inner membrane that plays crucial roles in the maintenance of crista junctions, inner membrane architecture, and formation of contact sites to the outer membrane. This Saccharomyces cerevisiae (strain RM11-1a) (Baker's yeast) protein is MICOS complex subunit MIC27 (MIC27).